The sequence spans 500 residues: MRRSIVIVIALTAKGFLHRHLLEKGNLVTALSLRICNSRAFSGRSDYRERLRSGLHSIKFNDALTLFCDMAESHPLPSIVDFSRLLIAIAKLNKYEAVISLFRHLEMLGISHDLYSFTTLIDCFCRCARLSLALSCLGKMMKLGFEPSIVTFGSLVNGFCHVNRFYEAMSLVDQIVGLGYEPNVVIYNTIIDSLCEKGQVNTALDVLKHMKKMGIRPDVVTYNSLITRLFHSGTWGVSARILSDMMRMGISPDVITFSALIDVYGKEGQLLEAKKQYNEMIQRSVNPNIVTYNSLINGLCIHGLLDEAKKVLNVLVSKGFFPNAVTYNTLINGYCKAKRVDDGMKILCVMSRDGVDGDTFTYNTLYQGYCQAGKFSAAEKVLGRMVSCGVHPDMYTFNILLDGLCDHGKIGKALVRLEDLQKSKTVVGIITYNIIIKGLCKADKVEDAWYLFCSLALKGVSPDVITYITMMIGLRRKRLWREAHELYRKMQKEDGLMPIK.

PPR repeat units follow at residues 78-112, 113-147, 148-182, 183-217, 218-252, 253-287, 288-322, 323-357, 358-392, 393-427, 428-462, and 463-498; these read SIVDFSRLLIAIAKLNKYEAVISLFRHLEMLGISH, DLYSFTTLIDCFCRCARLSLALSCLGKMMKLGFEP, SIVTFGSLVNGFCHVNRFYEAMSLVDQIVGLGYEP, NVVIYNTIIDSLCEKGQVNTALDVLKHMKKMGIRP, DVVTYNSLITRLFHSGTWGVSARILSDMMRMGISP, DVITFSALIDVYGKEGQLLEAKKQYNEMIQRSVNP, NIVTYNSLINGLCIHGLLDEAKKVLNVLVSKGFFP, NAVTYNTLINGYCKAKRVDDGMKILCVMSRDGVDG, DTFTYNTLYQGYCQAGKFSAAEKVLGRMVSCGVHP, DMYTFNILLDGLCDHGKIGKALVRLEDLQKSKTVV, GIITYNIIIKGLCKADKVEDAWYLFCSLALKGVSP, and DVITYITMMIGLRRKRLWREAHELYRKMQKEDGLMP.

This sequence belongs to the PPR family. P subfamily.

The chain is Pentatricopeptide repeat-containing protein At1g06580 from Arabidopsis thaliana (Mouse-ear cress).